The primary structure comprises 751 residues: Photosystem I P700 chlorophyll a apoprotein A1 (751 aa).

A run of 8 helical transmembrane segments spans residues 73–96, 159–182, 198–222, 294–312, 349–372, 388–414, 436–458, and 533–551; these read VFSA…FHGA, LYIT…FHYH, LNHH…HVSL, VAHH…GHMY, WHAQ…QHMY, LSLF…IFMV, AIIS…LYIH, and FLVH…LILL. Positions 575 and 584 each coordinate [4Fe-4S] cluster. Helical transmembrane passes span 591-612 and 665-687; these read HVFL…HFSW and LSAY…MFLF. Position 676 (H676) interacts with chlorophyll a'. The chlorophyll a site is built by M684 and Y692. Phylloquinone is bound at residue W693. A helical membrane pass occupies residues 725–745; the sequence is AVGVAHYLLGGIATTWSFFLA.

This sequence belongs to the PsaA/PsaB family. As to quaternary structure, the PsaA/B heterodimer binds the P700 chlorophyll special pair and subsequent electron acceptors. PSI consists of a core antenna complex that captures photons, and an electron transfer chain that converts photonic excitation into a charge separation. The eukaryotic PSI reaction center is composed of at least 11 subunits. P700 is a chlorophyll a/chlorophyll a' dimer, A0 is one or more chlorophyll a, A1 is one or both phylloquinones and FX is a shared 4Fe-4S iron-sulfur center. serves as cofactor.

It is found in the plastid. Its subcellular location is the chloroplast thylakoid membrane. It carries out the reaction reduced [plastocyanin] + hnu + oxidized [2Fe-2S]-[ferredoxin] = oxidized [plastocyanin] + reduced [2Fe-2S]-[ferredoxin]. Functionally, psaA and PsaB bind P700, the primary electron donor of photosystem I (PSI), as well as the electron acceptors A0, A1 and FX. PSI is a plastocyanin/cytochrome c6-ferredoxin oxidoreductase, converting photonic excitation into a charge separation, which transfers an electron from the donor P700 chlorophyll pair to the spectroscopically characterized acceptors A0, A1, FX, FA and FB in turn. Oxidized P700 is reduced on the lumenal side of the thylakoid membrane by plastocyanin or cytochrome c6. The polypeptide is Photosystem I P700 chlorophyll a apoprotein A1 (Euglena gracilis).